Here is a 94-residue protein sequence, read N- to C-terminus: uncharacterized protein (94 aa).

The first 25 residues, 1–25 (MRAAIAVLFIALVGLATYHLVMSQA), serve as a signal peptide directing secretion.

This is an uncharacterized protein from Archaeoglobus fulgidus (strain ATCC 49558 / DSM 4304 / JCM 9628 / NBRC 100126 / VC-16).